Consider the following 87-residue polypeptide: MANSAQARKRARQASAQRDHNMSQRSELRTAIKKVRKAIEAGDKAAAQAVYQSSVSVIDSIADKQIIHKNKAARHKSRLSLAVKGMA.

Positions 1–28 (MANSAQARKRARQASAQRDHNMSQRSEL) are disordered. A compositionally biased stretch (basic and acidic residues) spans 17–28 (QRDHNMSQRSEL).

Belongs to the bacterial ribosomal protein bS20 family.

Functionally, binds directly to 16S ribosomal RNA. The protein is Small ribosomal subunit protein bS20 of Thiobacillus denitrificans (strain ATCC 25259 / T1).